A 423-amino-acid polypeptide reads, in one-letter code: Dihydroorotase (423 aa).

Zn(2+) contacts are provided by His-56 and His-58. Substrate-binding positions include His-58–Arg-60 and Asn-89. Zn(2+) contacts are provided by Lys-137, His-168, His-227, and Asp-302. Lys-137 bears the N6-carboxylysine mark. Asp-302 is a catalytic residue. Residue His-306 participates in substrate binding.

Belongs to the metallo-dependent hydrolases superfamily. DHOase family. Class I DHOase subfamily. Zn(2+) serves as cofactor.

It carries out the reaction (S)-dihydroorotate + H2O = N-carbamoyl-L-aspartate + H(+). The protein operates within pyrimidine metabolism; UMP biosynthesis via de novo pathway; (S)-dihydroorotate from bicarbonate: step 3/3. Functionally, catalyzes the reversible cyclization of carbamoyl aspartate to dihydroorotate. The sequence is that of Dihydroorotase from Methanocaldococcus jannaschii (strain ATCC 43067 / DSM 2661 / JAL-1 / JCM 10045 / NBRC 100440) (Methanococcus jannaschii).